Consider the following 242-residue polypeptide: Beta-carotene ketolase (242 aa).

It catalyses the reaction all-trans-beta-carotene + 2 AH2 + 2 O2 = echinenone + 2 A + 3 H2O. It carries out the reaction echinenone + 2 AH2 + 2 O2 = canthaxanthin + 2 A + 3 H2O. Its pathway is carotenoid biosynthesis; astaxanthin biosynthesis. Functionally, converts beta-carotene to canthaxanthin via echinenone. This Paracoccus sp. (strain N81106 / MBIC 01143) (Agrobacterium aurantiacum) protein is Beta-carotene ketolase (crtW).